The chain runs to 348 residues: UDP-3-O-acylglucosamine N-acyltransferase (348 aa).

Histidine 257 acts as the Proton acceptor in catalysis.

This sequence belongs to the transferase hexapeptide repeat family. LpxD subfamily. As to quaternary structure, homotrimer.

The catalysed reaction is a UDP-3-O-[(3R)-3-hydroxyacyl]-alpha-D-glucosamine + a (3R)-hydroxyacyl-[ACP] = a UDP-2-N,3-O-bis[(3R)-3-hydroxyacyl]-alpha-D-glucosamine + holo-[ACP] + H(+). The protein operates within bacterial outer membrane biogenesis; LPS lipid A biosynthesis. Catalyzes the N-acylation of UDP-3-O-acylglucosamine using 3-hydroxyacyl-ACP as the acyl donor. Is involved in the biosynthesis of lipid A, a phosphorylated glycolipid that anchors the lipopolysaccharide to the outer membrane of the cell. The protein is UDP-3-O-acylglucosamine N-acyltransferase of Bartonella quintana (strain Toulouse) (Rochalimaea quintana).